We begin with the raw amino-acid sequence, 483 residues long: Glutamyl-tRNA(Gln) amidotransferase subunit A (483 aa).

Active-site charge relay system residues include lysine 76 and serine 151. Serine 175 functions as the Acyl-ester intermediate in the catalytic mechanism.

This sequence belongs to the amidase family. GatA subfamily. In terms of assembly, heterotrimer of A, B and C subunits.

It carries out the reaction L-glutamyl-tRNA(Gln) + L-glutamine + ATP + H2O = L-glutaminyl-tRNA(Gln) + L-glutamate + ADP + phosphate + H(+). Its function is as follows. Allows the formation of correctly charged Gln-tRNA(Gln) through the transamidation of misacylated Glu-tRNA(Gln) in organisms which lack glutaminyl-tRNA synthetase. The reaction takes place in the presence of glutamine and ATP through an activated gamma-phospho-Glu-tRNA(Gln). The chain is Glutamyl-tRNA(Gln) amidotransferase subunit A from Nitrosococcus oceani (strain ATCC 19707 / BCRC 17464 / JCM 30415 / NCIMB 11848 / C-107).